A 532-amino-acid chain; its full sequence is MALTRFERFLGRLLRAVVWILFAAFKLFAPQQRHGVSRLPPITNPLLLLSAMQLARKIRRKEVTSVEVVQAYIDRIQEVNPLINAMVKDRFSAALQEAAQVDKLIEEETGGEDVLEDRLPLLGVPITVKEAFALQGMPNSTGLLTRRDLVSGADAPSVALLKRAGAIPLGVTNCSELCMWLESHNHLYGITNNPYDFERIVGGSSGGEGSILGAGSSVIGIGSDIGGSIRIPCFFNGIFGHKPSVGIVNNEGQYPPASGQQMGFLCTGPMCRYAEDLIPMLSIMGGPNAEKLSLFTEVDLKKLRFFSVPHNGGSHLVSPVEPQLLHAQKMVVKRLEADLGVKVQELLIPQLKYSFQIWGTMMASPGKDGKPPTTFAELMSEGGKKVWPAWELFKWFLGFSSHTLAAIGLALVELFQSSHPSPFIMQQKESLQQELEELLGTDGVLLYPSHPLIAQKHHHPIFTPFNFSYTGIFNILGLPVTQCPLGLSAEGLPLGVQIVAGKLQDRLSLATALYLEKAFGGWREPGKTTIKP.

A helical transmembrane segment spans residues 9-29; that stretch reads FLGRLLRAVVWILFAAFKLFA. Active-site charge relay system residues include Lys-129 and Ser-204. The Acyl-ester intermediate role is filled by Ser-228.

The protein belongs to the amidase family.

It localises to the membrane. The enzyme catalyses N-(5Z,8Z,11Z,14Z-eicosatetraenoyl)-ethanolamine + H2O = ethanolamine + (5Z,8Z,11Z,14Z)-eicosatetraenoate. It carries out the reaction (9Z)-octadecenamide + H2O = (9Z)-octadecenoate + NH4(+). The protein is Fatty-acid amide hydrolase 2-A (faah2a) of Danio rerio (Zebrafish).